Reading from the N-terminus, the 423-residue chain is Putative protein phosphatase 2C 50 (423 aa).

Residues 52–380 (IFAFPFPTGT…DNMAAVVVPL (329 aa)) form the PPM-type phosphatase domain. Mn(2+) is bound by residues aspartate 74, glycine 75, aspartate 320, and aspartate 371.

Belongs to the PP2C family. Mg(2+) serves as cofactor. Requires Mn(2+) as cofactor.

The enzyme catalyses O-phospho-L-seryl-[protein] + H2O = L-seryl-[protein] + phosphate. It carries out the reaction O-phospho-L-threonyl-[protein] + H2O = L-threonyl-[protein] + phosphate. This chain is Putative protein phosphatase 2C 50, found in Arabidopsis thaliana (Mouse-ear cress).